A 97-amino-acid chain; its full sequence is Acylphosphatase (97 aa).

The Acylphosphatase-like domain occupies 9–97 (RKHIVVTGLV…ETARAFGVRQ (89 aa)). Residues Arg-24 and Asn-42 contribute to the active site.

This sequence belongs to the acylphosphatase family.

It carries out the reaction an acyl phosphate + H2O = a carboxylate + phosphate + H(+). This chain is Acylphosphatase (acyP), found in Bifidobacterium longum (strain NCC 2705).